We begin with the raw amino-acid sequence, 673 residues long: Citrate exporter 1 (673 aa).

Positions 1 to 44 are disordered; the sequence is MFNLNTKSSKEPEVTEVAVDSTPSSPVTRESSPESSPDNSAVDL. Over residues 21-39 the composition is skewed to polar residues; sequence STPSSPVTRESSPESSPDN. A helical transmembrane segment spans residues 67 to 87; sequence FLVFGAMAFCMLVSFMDQNGI. Residue N99 is glycosylated (N-linked (GlcNAc...) asparagine). 4 helical membrane-spanning segments follow: residues 103-123, 133-153, 164-184, and 194-214; these read TISW…VLYG, LVFM…ACAQ, FSGI…SDIV, and GILG…GAAF. N-linked (GlcNAc...) asparagine glycosylation is present at N217. 8 helical membrane-spanning segments follow: residues 222 to 242, 261 to 281, 292 to 312, 322 to 342, 364 to 384, 393 to 413, 419 to 439, and 465 to 485; these read AIFY…FFIL, PGLF…AGGG, ISML…EGFF, IFGT…GIAY, AAGM…ISGQ, LEVI…KCFW, MALL…CFQP, and SFGG…SLKA. N-linked (GlcNAc...) asparagine glycosylation occurs at N526. Residues 529 to 549 form a helical membrane-spanning segment; it reads HTVFVFLCPIVGACLLVTVFV. A compositionally biased stretch (basic and acidic residues) spans 564 to 596; it reads AKTVEDKDKDESGTDCEDMTKGEVLVSEKEGKL. 2 disordered regions span residues 564–608 and 636–673; these read AKTV…MHFG and FPPM…IQEE. N599 and N662 each carry an N-linked (GlcNAc...) asparagine glycan.

The protein belongs to the major facilitator superfamily.

The protein resides in the cell membrane. It catalyses the reaction citrate(in) = citrate(out). Transmembrane transporter that exports citrate across the cell membrane. The sequence is that of Citrate exporter 1 from Yarrowia lipolytica (strain CLIB 122 / E 150) (Yeast).